The chain runs to 465 residues: Cysteine--tRNA ligase (465 aa).

Zn(2+) is bound at residue Cys28. The short motif at 30 to 40 is the 'HIGH' region element; sequence MTVYDYCHLGH. 3 residues coordinate Zn(2+): Cys209, His234, and Glu238. The 'KMSKS' region motif lies at 266–270; it reads KMSKS. Lys269 is an ATP binding site.

The protein belongs to the class-I aminoacyl-tRNA synthetase family. As to quaternary structure, monomer. The cofactor is Zn(2+).

It is found in the cytoplasm. The catalysed reaction is tRNA(Cys) + L-cysteine + ATP = L-cysteinyl-tRNA(Cys) + AMP + diphosphate. This is Cysteine--tRNA ligase from Nitrosomonas europaea (strain ATCC 19718 / CIP 103999 / KCTC 2705 / NBRC 14298).